The sequence spans 122 residues: Large ribosomal subunit protein uL14 (122 aa).

Belongs to the universal ribosomal protein uL14 family. Part of the 50S ribosomal subunit. Forms a cluster with proteins L3 and L19. In the 70S ribosome, L14 and L19 interact and together make contacts with the 16S rRNA in bridges B5 and B8.

Functionally, binds to 23S rRNA. Forms part of two intersubunit bridges in the 70S ribosome. The polypeptide is Large ribosomal subunit protein uL14 (Psychrobacter arcticus (strain DSM 17307 / VKM B-2377 / 273-4)).